The sequence spans 119 residues: Large ribosomal subunit protein uL18 (119 aa).

The protein belongs to the universal ribosomal protein uL18 family. As to quaternary structure, part of the 50S ribosomal subunit; part of the 5S rRNA/L5/L18/L25 subcomplex. Contacts the 5S and 23S rRNAs.

Its function is as follows. This is one of the proteins that bind and probably mediate the attachment of the 5S RNA into the large ribosomal subunit, where it forms part of the central protuberance. The protein is Large ribosomal subunit protein uL18 of Lactobacillus delbrueckii subsp. bulgaricus (strain ATCC 11842 / DSM 20081 / BCRC 10696 / JCM 1002 / NBRC 13953 / NCIMB 11778 / NCTC 12712 / WDCM 00102 / Lb 14).